Consider the following 97-residue polypeptide: Osteocalcin (97 aa).

An N-terminal signal peptide occupies residues 1-20; sequence MKAAALLLLAALLTFSLCRS. The propeptide occupies 21–48; sequence APDGSDARSAKAFISHRQRAEMVRRQKR. Residues 49–95 enclose the Gla domain; it reads HYAQDSGVAGAPPNPLEAQREVCELSPDCDELADQIGFQEAYRRFYG. Glutamate 65, glutamate 69, glutamate 72, and aspartate 78 together coordinate Ca(2+). A 4-carboxyglutamate mark is found at glutamate 65, glutamate 69, and glutamate 72. A disulfide bridge connects residues cysteine 71 and cysteine 77.

It belongs to the osteocalcin/matrix Gla protein family. Gamma-carboxyglutamate residues are formed by vitamin K dependent carboxylation by GGCX. These residues are essential for the binding of calcium.

It is found in the secreted. The carboxylated form is one of the main organic components of the bone matrix, which constitutes 1-2% of the total bone protein. The carboxylated form binds strongly to apatite and calcium. This Gallus gallus (Chicken) protein is Osteocalcin (BGLAP).